Reading from the N-terminus, the 446-residue chain is Divalent metal cation transporter MntH (446 aa).

11 consecutive transmembrane segments (helical) span residues 32-52 (FSFL…GNWI), 59-79 (AQFG…AMLL), 107-127 (AFVF…AEVI), 139-159 (IPLL…LFIM), 168-188 (AIVG…VFIA), 210-230 (GALF…NLYL), 264-284 (SIAF…FFGV), 303-323 (PLLG…ALLA), 355-375 (LITR…FNSN), 381-401 (QLLV…LIPL), and 420-440 (VNII…YLII).

Belongs to the NRAMP family.

It localises to the cell membrane. H(+)-stimulated, divalent metal cation uptake system. This Staphylococcus saprophyticus subsp. saprophyticus (strain ATCC 15305 / DSM 20229 / NCIMB 8711 / NCTC 7292 / S-41) protein is Divalent metal cation transporter MntH.